A 156-amino-acid polypeptide reads, in one-letter code: Small ribosomal subunit protein uS7 (156 aa).

It belongs to the universal ribosomal protein uS7 family. Part of the 30S ribosomal subunit. Contacts proteins S9 and S11.

One of the primary rRNA binding proteins, it binds directly to 16S rRNA where it nucleates assembly of the head domain of the 30S subunit. Is located at the subunit interface close to the decoding center, probably blocks exit of the E-site tRNA. The protein is Small ribosomal subunit protein uS7 of Prochlorococcus marinus (strain MIT 9303).